The chain runs to 548 residues: Chaperonin GroEL (548 aa).

Residues 30-33, Lys51, 87-91, Gly415, and Asp496 each bind ATP; these read TLGP and DGTTT.

Belongs to the chaperonin (HSP60) family. In terms of assembly, forms a cylinder of 14 subunits composed of two heptameric rings stacked back-to-back. Interacts with the co-chaperonin GroES.

Its subcellular location is the cytoplasm. The enzyme catalyses ATP + H2O + a folded polypeptide = ADP + phosphate + an unfolded polypeptide.. Its function is as follows. Together with its co-chaperonin GroES, plays an essential role in assisting protein folding. The GroEL-GroES system forms a nano-cage that allows encapsulation of the non-native substrate proteins and provides a physical environment optimized to promote and accelerate protein folding. The polypeptide is Chaperonin GroEL (Haemophilus influenzae (strain ATCC 51907 / DSM 11121 / KW20 / Rd)).